A 304-amino-acid polypeptide reads, in one-letter code: MDVFQKVEKIGEGTYGVVYKARNKVTGQLVALKKIRLDLEAEGVPSTAVREISLLKELKHPNIIKLLDVVHREKKLYMVFEFLTQDLKRHMDSSPTSELPLPVVKSYLAQLLEGVSFCHSHRVIHRDLKPQNLLLDGLGAIKLADFGLARAFGVPLRTYTHEVVTLWYRAPEILLGSKFYSTAVDIWSIGCIFAEMVTGKALFPGDSEIDQLFRIFRTLGTPSEATWPGVSQMPDYQSSFPKWSRKGLEEIVPSLGPEGKDLLLRLLQYDPSQRISAKTALAHPYFSPGHSLAPQQCTAGRSSR.

Residues 4-286 (FQKVEKIGEG…AKTALAHPYF (283 aa)) form the Protein kinase domain. Residues 10-18 (IGEGTYGVV) and Lys33 each bind ATP. The Proton acceptor role is filled by Asp127.

This sequence belongs to the protein kinase superfamily. CMGC Ser/Thr protein kinase family. CDC2/CDKX subfamily. Interacts with CABLES1 and ATF1. Binding to CCNC/cyclin-C promotes RB1 phosphorylation. Binds to CABLES2.

The enzyme catalyses L-seryl-[protein] + ATP = O-phospho-L-seryl-[protein] + ADP + H(+). The catalysed reaction is L-threonyl-[protein] + ATP = O-phospho-L-threonyl-[protein] + ADP + H(+). In terms of biological role, serine/threonine-protein kinase that plays a critical role in the control of the eukaryotic cell cycle; involved in G0-G1 and G1-S cell cycle transitions. Interacts with CCNC/cyclin-C during interphase. Phosphorylates histone H1, ATF1, RB1 and CABLES1. ATF1 phosphorylation triggers ATF1 transactivation and transcriptional activities, and promotes cell proliferation and transformation. CDK3/cyclin-C mediated RB1 phosphorylation is required for G0-G1 transition. Promotes G1-S transition probably by contributing to the activation of E2F1, E2F2 and E2F3 in a RB1-independent manner. The chain is Cyclin-dependent kinase 3 (Cdk3) from Mus musculus (Mouse).